A 78-amino-acid polypeptide reads, in one-letter code: Protein SlyX homolog (78 aa).

Belongs to the SlyX family.

In Xanthomonas axonopodis pv. citri (strain 306), this protein is Protein SlyX homolog.